Reading from the N-terminus, the 442-residue chain is Tubulin beta chain (442 aa).

8 residues coordinate GTP: glutamine 11, glutamate 69, serine 138, glycine 142, threonine 143, glycine 144, asparagine 204, and asparagine 226. A Mg(2+)-binding site is contributed by glutamate 69.

The protein belongs to the tubulin family. In terms of assembly, dimer of alpha and beta chains. A typical microtubule is a hollow water-filled tube with an outer diameter of 25 nm and an inner diameter of 15 nM. Alpha-beta heterodimers associate head-to-tail to form protofilaments running lengthwise along the microtubule wall with the beta-tubulin subunit facing the microtubule plus end conferring a structural polarity. Microtubules usually have 13 protofilaments but different protofilament numbers can be found in some organisms and specialized cells. The cofactor is Mg(2+).

Its subcellular location is the cytoplasm. The protein resides in the cytoskeleton. Tubulin is the major constituent of microtubules, a cylinder consisting of laterally associated linear protofilaments composed of alpha- and beta-tubulin heterodimers. Microtubules grow by the addition of GTP-tubulin dimers to the microtubule end, where a stabilizing cap forms. Below the cap, tubulin dimers are in GDP-bound state, owing to GTPase activity of alpha-tubulin. In Trypanosoma cruzi, this protein is Tubulin beta chain.